The sequence spans 472 residues: Alanine--anticapsin ligase (472 aa).

Glu-109 serves as a coordination point for Mg(2+). ATP-binding residues include Lys-138 and Lys-178. One can recognise an ATP-grasp domain in the interval 142 to 355 (RDAFNKAGVK…MAQLLLDVLC (214 aa)). Mg(2+) is bound at residue Leu-182. Residues 184-185 (SS), 226-229 (EEFL), and Gln-268 each bind ATP. Residues Glu-273 and 309–311 (HTE) each bind substrate. Positions 311 and 324 each coordinate Mg(2+). 328–331 (RFAG) is a substrate binding site.

In terms of assembly, monomer or homodimer. Requires Mg(2+) as cofactor.

It carries out the reaction L-anticapsin + L-alanine + ATP = bacilysin + ADP + phosphate + H(+). It participates in antibiotic biosynthesis; bacilysin biosynthesis. Its function is as follows. Part of the bacABCDEFG operon responsible for the biosynthesis of bacilysin, an irreversible inactivator of the glutaminase domain of glucosamine synthetase. Catalyzes the formation of alpha-dipeptides from various L-amino acids in the presence of ATP. In vivo catalyzes the ligation of L-alanine and L-anticapsin (epoxycyclohexanonyl-Ala) to produce the final bacilysin antibiotic (L-Ala-L-4S-cyclohexenonyl-Ala dipeptide). The substrate specificity is restricted to small amino acids such as L-Ala, for the N-terminal end of the dipeptide, whereas a wide range of hydrophobic amino acids such as L-Phe, L-Tyr and L-Met are recognized for the C-terminal end. In Bacillus subtilis (strain 168), this protein is Alanine--anticapsin ligase.